We begin with the raw amino-acid sequence, 1009 residues long: Glutamate receptor ionotropic, delta-2 (1009 aa).

The first 23 residues, 1 to 23, serve as a signal peptide directing secretion; the sequence is MKVFPAVLFLITFWSLEWEPVLP. Residues 24-566 lie on the Extracellular side of the membrane; that stretch reads DSIIHIGAIF…DMFACLAPFD (543 aa). 4 N-linked (GlcNAc...) asparagine glycosylation sites follow: Asn293, Asn306, Asn390, and Asn426. The Ca(2+) site is built by Glu531, Val534, and Asp535. A helical transmembrane segment spans residues 567–587; it reads LSLWACIAGTVLLVGTLVYLL. The Cytoplasmic segment spans residues 588–635; that stretch reads NWLNPPRLPMGSVSSTTLYNSMWFVYGSFVQQGGEVPYTTLATRMMMG. A helical transmembrane segment spans residues 636 to 656; that stretch reads VWWLFALIVISSYTANLAAFL. Topologically, residues 657–830 are extracellular; it reads TISRIENSIQ…KSGSALDIHS (174 aa). N-linked (GlcNAc...) asparagine glycosylation occurs at Asn713. Ca(2+) contacts are provided by Asp753, Asp755, and Ser757. The helical transmembrane segment at 831–851 threads the bilayer; it reads FAGVFFVLAAGVVLSCLIATV. Residues 852 to 1009 lie on the Cytoplasmic side of the membrane; sequence ETWWTRRKGS…GNDPDRGTSI (158 aa). The segment at 989–1009 is disordered; sequence YQPTPAPNFSYGNDPDRGTSI.

The protein belongs to the glutamate-gated ion channel (TC 1.A.10.1) family. GRID2 subfamily. Tetramer; dimer of dimers. Expressed in cerebellar Purkinje cells, in crest cells in the medial octavolateral nucleus and in type I neurons of the optic tectum.

Its subcellular location is the postsynaptic cell membrane. It catalyses the reaction Ca(2+)(in) = Ca(2+)(out). It carries out the reaction Na(+)(in) = Na(+)(out). Member of the ionotropic glutamate receptor family, which plays a crucial role in synaptic organization and signal transduction in the central nervous system. Although it shares structural features with ionotropic glutamate receptors, does not bind glutamate as a primary ligand. Promotes synaptogenesis and mediates the D-Serine-dependent long term depression signals and AMPA receptor endocytosis of cerebellar parallel fiber-Purkinje cell (PF-PC) synapses through the NRX1B-CBLN1-GRID2 triad complex. In the presence of neurexins and cerebellins, forms cation-selective channels that are proposed to be gated by glycine and D-serine. However, recent research disputes this ligand-gated cation channel activity. Cation-selective ion channel activity can be triggered by GRM1 in Purkinje cells. The sequence is that of Glutamate receptor ionotropic, delta-2 from Danio rerio (Zebrafish).